The chain runs to 142 residues: uncharacterized protein (142 aa).

The interval Ile-19–Ser-54 is disordered. Positions His-26–His-35 are enriched in basic residues.

This is an uncharacterized protein from Saccharomyces cerevisiae (strain ATCC 204508 / S288c) (Baker's yeast).